Consider the following 552-residue polypeptide: Urocanate hydratase (552 aa).

NAD(+) contacts are provided by residues 48–49, Q126, 172–174, D192, 238–239, 259–263, 268–269, and Y317; these read GG, GMG, NA, QTSAH, and YL. The active site involves C405. An NAD(+)-binding site is contributed by G487.

Belongs to the urocanase family. It depends on NAD(+) as a cofactor.

The protein resides in the cytoplasm. It carries out the reaction 4-imidazolone-5-propanoate = trans-urocanate + H2O. It functions in the pathway amino-acid degradation; L-histidine degradation into L-glutamate; N-formimidoyl-L-glutamate from L-histidine: step 2/3. In terms of biological role, catalyzes the conversion of urocanate to 4-imidazolone-5-propionate. The sequence is that of Urocanate hydratase from Streptomyces griseus subsp. griseus (strain JCM 4626 / CBS 651.72 / NBRC 13350 / KCC S-0626 / ISP 5235).